The following is a 72-amino-acid chain: UPF0270 protein Ent638_3781 (72 aa).

It belongs to the UPF0270 family.

The protein is UPF0270 protein Ent638_3781 of Enterobacter sp. (strain 638).